A 230-amino-acid chain; its full sequence is Flagellar L-ring protein (230 aa).

The N-terminal stretch at 1–15 is a signal peptide; that stretch reads MSRLPSLSSLCLAIA. Cys16 carries N-palmitoyl cysteine lipidation. The S-diacylglycerol cysteine moiety is linked to residue Cys16.

This sequence belongs to the FlgH family. As to quaternary structure, the basal body constitutes a major portion of the flagellar organelle and consists of four rings (L,P,S, and M) mounted on a central rod.

It localises to the cell outer membrane. Its subcellular location is the bacterial flagellum basal body. Functionally, assembles around the rod to form the L-ring and probably protects the motor/basal body from shearing forces during rotation. The chain is Flagellar L-ring protein from Xanthomonas campestris pv. campestris (strain 8004).